The primary structure comprises 688 residues: DNA ligase (688 aa).

Residues 51 to 55 (DSEYD), 100 to 101 (SL), and Glu129 contribute to the NAD(+) site. The N6-AMP-lysine intermediate role is filled by Lys131. Arg152, Glu189, Lys308, and Lys332 together coordinate NAD(+). Residues Cys426, Cys429, Cys444, and Cys450 each contribute to the Zn(2+) site. A BRCT domain is found at 609–688 (ADEQPLKGQT…DELLALLANS (80 aa)).

The protein belongs to the NAD-dependent DNA ligase family. LigA subfamily. Requires Mg(2+) as cofactor. Mn(2+) is required as a cofactor.

It carries out the reaction NAD(+) + (deoxyribonucleotide)n-3'-hydroxyl + 5'-phospho-(deoxyribonucleotide)m = (deoxyribonucleotide)n+m + AMP + beta-nicotinamide D-nucleotide.. Its function is as follows. DNA ligase that catalyzes the formation of phosphodiester linkages between 5'-phosphoryl and 3'-hydroxyl groups in double-stranded DNA using NAD as a coenzyme and as the energy source for the reaction. It is essential for DNA replication and repair of damaged DNA. The sequence is that of DNA ligase from Shewanella sp. (strain MR-7).